Consider the following 107-residue polypeptide: YcgL domain-containing protein Psyc_0800 (107 aa).

The region spanning 1 to 95 (MHCDIYKFLK…QDVMRRQAEL (95 aa)) is the YcgL domain.

This is YcgL domain-containing protein Psyc_0800 from Psychrobacter arcticus (strain DSM 17307 / VKM B-2377 / 273-4).